Reading from the N-terminus, the 595-residue chain is Putative lipase atg15 (595 aa).

Topologically, residues 1–20 are cytoplasmic; the sequence is MKGLRGHNKKSFWGNTRLSD. Residues 21–41 form a helical; Signal-anchor for type II membrane protein membrane-spanning segment; it reads LLWPVTLLPGLISAYQPVYLG. At 42 to 595 the chain is on the lumenal side; that stretch reads SRQSSPFLPP…TTTGKHLGRF (554 aa). Residues Asn-164, Asn-199, Asn-221, Asn-279, and Asn-303 are each glycosylated (N-linked (GlcNAc...) asparagine). The Charge relay system role is filled by Ser-319. Residue Asn-465 is glycosylated (N-linked (GlcNAc...) asparagine).

This sequence belongs to the AB hydrolase superfamily. Lipase family. As to quaternary structure, binds to both phosphatidylinositol (PI) and phosphatidylinositol 3,5-bisphosphate (PIP2).

It is found in the endosome. The protein localises to the multivesicular body membrane. Its subcellular location is the prevacuolar compartment membrane. It catalyses the reaction a triacylglycerol + H2O = a diacylglycerol + a fatty acid + H(+). Functionally, lipase which is essential for lysis of subvacuolar cytoplasm to vacuole targeted bodies and intravacuolar autophagic bodies. Involved in the lysis of intravacuolar multivesicular body (MVB) vesicles. The intravacuolar membrane disintegration by atg15 is critical to life span extension. This is Putative lipase atg15 (atg15) from Aspergillus niger (strain ATCC MYA-4892 / CBS 513.88 / FGSC A1513).